The sequence spans 166 residues: Cyclin-dependent kinase 4 inhibitor D (166 aa).

Met-1 is modified (N-acetylmethionine). ANK repeat units follow at residues 41–69 (FGKTALQVMMFGSTAIALELLKQGASPNV), 73–102 (SGTSPVHDAARTGFLDTLKVLVEHGADVNV), 106–135 (TGALPIHLAVQEGHTAVVSFLAAESDLHRR), and 138–166 (RGLTPLELALQRGAQDLVDILQGHMVAPL).

The protein belongs to the CDKN2 cyclin-dependent kinase inhibitor family. In terms of assembly, interacts with CDK6.

The protein localises to the nucleus. It is found in the cytoplasm. Its function is as follows. Interacts strongly with CDK4 and CDK6 and inhibits them. The sequence is that of Cyclin-dependent kinase 4 inhibitor D (CDKN2D) from Homo sapiens (Human).